Consider the following 133-residue polypeptide: EFSRSQRVSQEMQKEIALILQREIKDPRVGMATVSGIELSRDLAYAKVFVTFLNVLTDNADPDTAKNGIKALQDASGYIRTLLGKAMRLRIVPELTFAYDNSLIEGMRMSNLVTNVIKNDVERQVNPGSDEEK.

This sequence belongs to the RbfA family. As to quaternary structure, monomer. Binds 30S ribosomal subunits, but not 50S ribosomal subunits or 70S ribosomes.

The protein resides in the cytoplasm. One of several proteins that assist in the late maturation steps of the functional core of the 30S ribosomal subunit. Associates with free 30S ribosomal subunits (but not with 30S subunits that are part of 70S ribosomes or polysomes). Required for efficient processing of 16S rRNA. May interact with the 5'-terminal helix region of 16S rRNA. The sequence is that of Ribosome-binding factor A from Yersinia enterocolitica.